The primary structure comprises 334 residues: Mevalonate kinase (334 aa).

110–120 (PVGAGLGSSAA) lines the ATP pocket. Asp161 functions as the Proton acceptor in the catalytic mechanism.

The protein belongs to the GHMP kinase family. Mevalonate kinase subfamily. In terms of assembly, homodimer. Mg(2+) serves as cofactor.

It localises to the cytoplasm. The enzyme catalyses (R)-mevalonate + ATP = (R)-5-phosphomevalonate + ADP + H(+). The protein operates within isoprenoid biosynthesis; isopentenyl diphosphate biosynthesis via mevalonate pathway; isopentenyl diphosphate from (R)-mevalonate: step 1/3. Functionally, catalyzes the phosphorylation of (R)-mevalonate (MVA) to (R)-mevalonate 5-phosphate (MVAP). Functions in the mevalonate (MVA) pathway leading to isopentenyl diphosphate (IPP), a key precursor for the biosynthesis of isoprenoid compounds such as archaeal membrane lipids. This is Mevalonate kinase from Pyrococcus furiosus (strain ATCC 43587 / DSM 3638 / JCM 8422 / Vc1).